The primary structure comprises 342 residues: Voltage-gated hydrogen channel 1 (342 aa).

Disordered stretches follow at residues 1-20 (MEGD…INPN) and 74-102 (FNDN…SEQK). At 1–148 (MEGDNCNKSR…KLRHILHSKP (148 aa)) the chain is on the cytoplasmic side. Over residues 86–102 (QEQSTQNTMISMQSEQK) the composition is skewed to polar residues. The helical transmembrane segment at 149-169 (IHVAIIVLVVLDSFLVVGELL) threads the bilayer. Topologically, residues 170-185 (IDLKVIIVPHGNPAPE) are extracellular. Residues 186-208 (ILHGFSLSILSIFMVEIALKIIA) form a helical membrane-spanning segment. Residues 209–217 (DHRHFIHHK) are Cytoplasmic-facing. The helical transmembrane segment at 218-238 (VEVLDAVVVVISFGVDIALIF) threads the bilayer. At 239–247 (VGESEALAA) the chain is on the extracellular side. Residues 248-268 (IGLLVILRLWRVFRIINGIIV) form a helical membrane-spanning segment. Residues 269 to 342 (TVKTKADDRV…HSTTTASADV (74 aa)) are Cytoplasmic-facing. Residues 271-315 (KTKADDRVHEIKKKNSELELQIHNLEEKLSQKEQDMSRLHEILRC) are a coiled coil.

It belongs to the hydrogen channel family. In terms of assembly, homodimer.

The protein localises to the membrane. Its subcellular location is the cell membrane. Less sensitive to zinc ions as compared to the mammalian homologs. In terms of biological role, mediates the voltage-dependent proton permeability of excitable membranes. Forms a proton-selective channel through which protons may pass in accordance with their electrochemical gradient. This is Voltage-gated hydrogen channel 1 (HVCN1) from Ciona intestinalis (Transparent sea squirt).